Consider the following 841-residue polypeptide: Protein translocase subunit SecA (841 aa).

Residues Gln85, 103–107 (GEGKT), and Asp492 contribute to the ATP site. Residues 790-814 (IQGQTTAHQPKEGDEEKQAKKKPVR) are disordered. Residues 798–807 (QPKEGDEEKQ) show a composition bias toward basic and acidic residues. Positions 825, 827, 836, and 837 each coordinate Zn(2+).

This sequence belongs to the SecA family. In terms of assembly, monomer and homodimer. Part of the essential Sec protein translocation apparatus which comprises SecA, SecYEG and auxiliary proteins SecDF. Other proteins may also be involved. Zn(2+) is required as a cofactor.

It is found in the cell membrane. The protein localises to the cytoplasm. It catalyses the reaction ATP + H2O + cellular proteinSide 1 = ADP + phosphate + cellular proteinSide 2.. Its function is as follows. Part of the Sec protein translocase complex. Interacts with the SecYEG preprotein conducting channel. Has a central role in coupling the hydrolysis of ATP to the transfer of proteins into and across the cell membrane, serving as an ATP-driven molecular motor driving the stepwise translocation of polypeptide chains across the membrane. The protein is Protein translocase subunit SecA of Bacillus licheniformis (strain ATCC 14580 / DSM 13 / JCM 2505 / CCUG 7422 / NBRC 12200 / NCIMB 9375 / NCTC 10341 / NRRL NRS-1264 / Gibson 46).